A 428-amino-acid polypeptide reads, in one-letter code: Glutamate--tRNA ligase 2 (428 aa).

The short motif at 6–16 is the 'HIGH' region element; the sequence is PSPTGDMRTEQ.

The protein belongs to the class-I aminoacyl-tRNA synthetase family. Glutamate--tRNA ligase type 1 subfamily. Monomer.

It is found in the cytoplasm. It catalyses the reaction tRNA(Glu) + L-glutamate + ATP = L-glutamyl-tRNA(Glu) + AMP + diphosphate. Catalyzes the attachment of glutamate to tRNA(Glu) in a two-step reaction: glutamate is first activated by ATP to form Glu-AMP and then transferred to the acceptor end of tRNA(Glu). This chain is Glutamate--tRNA ligase 2, found in Sulfurovum sp. (strain NBC37-1).